Here is a 408-residue protein sequence, read N- to C-terminus: Solute carrier family 35 member F1 (408 aa).

Positions methionine 1–proline 20 are disordered. Transmembrane regions (helical) follow at residues methionine 60–threonine 80, valine 94–valine 114, tryptophan 129–valine 147, glutamine 159–isoleucine 179, phenylalanine 186–valine 206, leucine 221–isoleucine 241, valine 247–isoleucine 267, leucine 284–isoleucine 304, serine 311–phenylalanine 331, and phenylalanine 335–serine 355.

It belongs to the SLC35F solute transporter family.

The protein resides in the cytoplasmic vesicle. The protein localises to the secretory vesicle. Its subcellular location is the synaptic vesicle membrane. Its function is as follows. Putative solute transporter. This Mus musculus (Mouse) protein is Solute carrier family 35 member F1 (Slc35f1).